The sequence spans 297 residues: Large ribosomal subunit protein uL18 (297 aa).

Glycine 2 carries the N-acetylglycine modification. An N6-acetyllysine mark is found at lysine 5 and lysine 48. The residue at position 185 (serine 185) is a Phosphoserine. Lysine 220 bears the N6-acetyllysine; alternate mark. Lysine 220 participates in a covalent cross-link: Glycyl lysine isopeptide (Lys-Gly) (interchain with G-Cter in SUMO1); alternate. Lysine 220 participates in a covalent cross-link: Glycyl lysine isopeptide (Lys-Gly) (interchain with G-Cter in SUMO2); alternate. Threonine 232 carries the phosphothreonine modification. The tract at residues 252–297 is disordered; the sequence is VYEKKPKKEVKKKRWNRPKMSLAQKKDRVAQKKASFLRAQERAAES. Residues 258 to 268 show a composition bias toward basic residues; it reads KKEVKKKRWNR. Residue serine 272 is modified to Phosphoserine.

The protein belongs to the universal ribosomal protein uL18 family. Component of the large ribosomal subunit (LSU). Part of the 5S RNP complex, which is a LSU subcomplex composed of the 5S RNA, RPL5 and RPL11. Component of a hexameric 5S RNP precursor complex, composed of 5S RNA, RRS1, RPF2/BXDC1, RPL5, RPL11 and HEATR3; this complex acts as a precursor for ribosome assembly. Interacts with NVL in an ATP-dependent manner. Interacts with RRP1B. Interacts with IPO5, IPO7 and KPNB1; these interactions may be involved in RPL5 nuclear import for the assembly of ribosomal subunits.

The protein localises to the cytoplasm. Its subcellular location is the nucleus. The protein resides in the nucleolus. In terms of biological role, component of the ribosome, a large ribonucleoprotein complex responsible for the synthesis of proteins in the cell. The small ribosomal subunit (SSU) binds messenger RNAs (mRNAs) and translates the encoded message by selecting cognate aminoacyl-transfer RNA (tRNA) molecules. The large subunit (LSU) contains the ribosomal catalytic site termed the peptidyl transferase center (PTC), which catalyzes the formation of peptide bonds, thereby polymerizing the amino acids delivered by tRNAs into a polypeptide chain. The nascent polypeptides leave the ribosome through a tunnel in the LSU and interact with protein factors that function in enzymatic processing, targeting, and the membrane insertion of nascent chains at the exit of the ribosomal tunnel. As part of the 5S RNP/5S ribonucleoprotein particle it is an essential component of the LSU, required for its formation and the maturation of rRNAs. It also couples ribosome biogenesis to p53/TP53 activation. As part of the 5S RNP it accumulates in the nucleoplasm and inhibits MDM2, when ribosome biogenesis is perturbed, mediating the stabilization and the activation of TP53. This is Large ribosomal subunit protein uL18 (RPL5) from Bos taurus (Bovine).